Here is a 973-residue protein sequence, read N- to C-terminus: Splicing regulator ARVCF (973 aa).

Residues 95 to 123 are disordered; it reads VTVEEDPGTPTSHVSIVTSEDGTTRRTET. A phosphothreonine mark is found at threonine 103 and threonine 105. The span at 103 to 115 shows a compositional bias: polar residues; that stretch reads TPTSHVSIVTSED. Position 171 is an omega-N-methylarginine (arginine 171). Disordered regions lie at residues 233-254 and 267-331; these read RREA…LPEH and RSLA…QPER. A Phosphoserine modification is found at serine 268. The span at 271 to 281 shows a compositional bias: acidic residues; sequence ADDEGGPDLEP. The segment covering 289-303 has biased composition (basic and acidic residues); it reads RRPEYGRGLRARALE. Residues serine 333, serine 336, serine 344, and serine 346 each carry the phosphoserine modification. 6 ARM repeats span residues 349–388, 391–430, 434–468, 469–509, 527–566, and 576–623; these read STRK…HLCF, EGIK…NLSY, ADNK…VTGT, LWNL…NEDS, LRNV…DTDN, and MRNL…GKKA. A disordered region spans residues 593-623; it reads YQEVEPGIPGSAATSQRRRKDDASCFGGKKA. Position 607 is a phosphoserine (serine 607). A Nuclear localization signal motif is present at residues 608 to 624; sequence QRRRKDDASCFGGKKAK. A Phosphothreonine modification is found at threonine 637. 4 ARM repeats span residues 641-681, 694-733, 734-776, and 777-821; these read PKRT…AAGA, TYIR…NLSL, DQRN…AVLN, and TIHE…SHVL. The tract at residues 771–955 is required for interaction with RNA-binding proteins DDX5, HNRNPH2 and SRSF1 and with mRNAs; sequence VVAVLNTIHE…VLGPGAPPFC (185 aa). The tract at residues 844–926 is disordered; it reads FQSASTAKGP…KELLKGPGPA (83 aa). Serine 865 is modified (phosphoserine). Position 866 is a phosphothreonine (threonine 866). The span at 872–881 shows a compositional bias: basic and acidic residues; it reads KNLDGEKSTT.

Belongs to the beta-catenin family. In terms of assembly, component of a ribonucleoprotein complex containing mRNAs and RNA-binding proteins including DDX5, HNRNPH2 and SRSF1 as well as ARVCF. Interacts (via the extreme C-terminus) with FRMPD2 (via the PDZ 2 domain). Interacts with CCDC85B. In terms of tissue distribution, expressed in optic nerve sheath envelope (at protein level). Expressed in heart (at protein level).

Its subcellular location is the cell junction. The protein localises to the adherens junction. It is found in the nucleus. It localises to the cytoplasm. Functionally, contributes to the regulation of alternative splicing of pre-mRNAs. In Rattus norvegicus (Rat), this protein is Splicing regulator ARVCF.